The primary structure comprises 336 residues: Cell division protein ZipA (336 aa).

Topologically, residues 1 to 6 are periplasmic; that stretch reads MMQDLR. The chain crosses the membrane as a helical span at residues 7–27; the sequence is LILIVVGAIAIIALLLHGLWT. Residues 28 to 336 lie on the Cytoplasmic side of the membrane; sequence SRKERSSLFR…RIRDVLKANA (309 aa). The span at 40 to 51 shows a compositional bias: basic and acidic residues; that stretch reads PVKRAKKARDET. Positions 40–190 are disordered; that stretch reads PVKRAKKARD…APAQPQQPAE (151 aa). Positions 76-89 are enriched in low complexity; that stretch reads SFSSSSFDNASFDN. Residues 126 to 138 are compositionally biased toward polar residues; the sequence is PRSQVRGDSNPQV. Low complexity predominate over residues 179–190; that stretch reads QPAPAQPQQPAE.

Belongs to the ZipA family. In terms of assembly, interacts with FtsZ via their C-terminal domains.

It localises to the cell inner membrane. Its function is as follows. Essential cell division protein that stabilizes the FtsZ protofilaments by cross-linking them and that serves as a cytoplasmic membrane anchor for the Z ring. Also required for the recruitment to the septal ring of downstream cell division proteins. This Pectobacterium carotovorum subsp. carotovorum (strain PC1) protein is Cell division protein ZipA.